The chain runs to 353 residues: Ferredoxin--NADP reductase (353 aa).

8 residues coordinate FAD: Thr-25, Glu-44, Gln-52, Tyr-57, Val-97, Phe-132, Asp-298, and Ser-339.

It belongs to the ferredoxin--NADP reductase type 2 family. In terms of assembly, homodimer. The cofactor is FAD.

The enzyme catalyses 2 reduced [2Fe-2S]-[ferredoxin] + NADP(+) + H(+) = 2 oxidized [2Fe-2S]-[ferredoxin] + NADPH. This chain is Ferredoxin--NADP reductase, found in Chlorobium phaeovibrioides (strain DSM 265 / 1930) (Prosthecochloris vibrioformis (strain DSM 265)).